A 140-amino-acid polypeptide reads, in one-letter code: Nucleoside diphosphate kinase (140 aa).

ATP is bound by residues Lys-11, Phe-59, Arg-87, Thr-93, Arg-104, and Asn-114. His-117 (pros-phosphohistidine intermediate) is an active-site residue.

This sequence belongs to the NDK family. In terms of assembly, homotetramer. The cofactor is Mg(2+).

The protein resides in the cytoplasm. It carries out the reaction a 2'-deoxyribonucleoside 5'-diphosphate + ATP = a 2'-deoxyribonucleoside 5'-triphosphate + ADP. The catalysed reaction is a ribonucleoside 5'-diphosphate + ATP = a ribonucleoside 5'-triphosphate + ADP. Major role in the synthesis of nucleoside triphosphates other than ATP. The ATP gamma phosphate is transferred to the NDP beta phosphate via a ping-pong mechanism, using a phosphorylated active-site intermediate. The protein is Nucleoside diphosphate kinase of Maricaulis maris (strain MCS10) (Caulobacter maris).